A 385-amino-acid polypeptide reads, in one-letter code: Interleukin-13 receptor subunit alpha-2 (385 aa).

The first 23 residues, 1 to 23 (MALMAVNTRCLCLFLLCTITGHS), serve as a signal peptide directing secretion. The Extracellular segment spans residues 24-336 (LEIKVNPPQD…WEGYTGPDSK (313 aa)). 3 Fibronectin type-III domains span residues 30–130 (PPQD…ADEG), 133–221 (GTKI…PIRS), and 236–334 (PPEF…TGPD). C61 and C109 are oxidised to a cystine. N-linked (GlcNAc...) asparagine glycosylation is present at N111. C141 and C151 are joined by a disulfide. N-linked (GlcNAc...) asparagine glycosylation is present at N164. A disulfide bridge connects residues C180 and C193. 2 N-linked (GlcNAc...) asparagine glycosylation sites follow: N211 and N295. The cysteines at positions 265 and 312 are disulfide-linked. Residues 318–322 (WSEWS) carry the WSXWS motif motif. The chain crosses the membrane as a helical span at residues 337-357 (IVFIVPVCLFFIFLLLLLCLI). At 358-385 (VEKEDPEPTLSLHVDLNKEMYAYEETLC) the chain is on the cytoplasmic side.

It belongs to the type I cytokine receptor family. Type 5 subfamily. As to quaternary structure, interacts with IL4RA. Interacts with high affinity to interleukin-13 (IL13), but not to interleukin-4 (IL4). In terms of processing, cleaved by MMP8 leading to a soluble form that is also able to interact with IL13.

The protein resides in the cell membrane. Cell surface receptor that plays a role in the regulation of IL-13-mediated responses. Functions as a decoy receptor that inhibits IL-13- and IL-4-mediated signal transduction via the JAK-STAT pathway and thereby modulates immune responses and inflammation. Serves as a functional signaling receptor for IL-13 in an alternative pathway involving AP-1 ultimately leading to the production of TGFB1. The polypeptide is Interleukin-13 receptor subunit alpha-2 (Il13ra2) (Rattus norvegicus (Rat)).